A 295-amino-acid chain; its full sequence is Pyridoxal 5'-phosphate synthase subunit PdxS (295 aa).

D25 provides a ligand contact to D-ribose 5-phosphate. The Schiff-base intermediate with D-ribose 5-phosphate role is filled by K82. Residue G154 coordinates D-ribose 5-phosphate. Position 166 (R166) interacts with D-glyceraldehyde 3-phosphate. Residues G215 and 236-237 (GS) each bind D-ribose 5-phosphate.

The protein belongs to the PdxS/SNZ family. In terms of assembly, in the presence of PdxT, forms a dodecamer of heterodimers.

It catalyses the reaction aldehydo-D-ribose 5-phosphate + D-glyceraldehyde 3-phosphate + L-glutamine = pyridoxal 5'-phosphate + L-glutamate + phosphate + 3 H2O + H(+). Its pathway is cofactor biosynthesis; pyridoxal 5'-phosphate biosynthesis. Functionally, catalyzes the formation of pyridoxal 5'-phosphate from ribose 5-phosphate (RBP), glyceraldehyde 3-phosphate (G3P) and ammonia. The ammonia is provided by the PdxT subunit. Can also use ribulose 5-phosphate and dihydroxyacetone phosphate as substrates, resulting from enzyme-catalyzed isomerization of RBP and G3P, respectively. This Bacillus cereus (strain 03BB102) protein is Pyridoxal 5'-phosphate synthase subunit PdxS.